The chain runs to 463 residues: Annexin A7 (463 aa).

Residues 1–18 (MSYPGYPPTGYPPFPGYP) show a composition bias toward pro residues. 2 disordered regions span residues 1–34 (MSYPGYPPTGYPPFPGYPPAGQESSFPTAGQYPY) and 77–149 (SPGG…MTQG). Positions 1 to 143 (MSYPGYPPTG…GGQAPYPSQP (143 aa)) are repeat-rich region. A 3 X 5 AA tandem repeats of G-Y-P-P-X region spans residues 5–20 (GYPPTGYPPFPGYPPA). The span at 86-99 (GGQGFGAPPGGAGF) shows a compositional bias: gly residues. Annexin repeat units follow at residues 160-231 (FDAM…ALFM), 232-303 (PSTY…SMCQ), 315-387 (QMAQ…TILQ), and 391-462 (NRPA…AIVG). N6-acetyllysine is present on lysine 208.

Belongs to the annexin family. As to quaternary structure, interacts with PDCD6.

In terms of biological role, calcium/phospholipid-binding protein which promotes membrane fusion and is involved in exocytosis. The chain is Annexin A7 (Anxa7) from Mus musculus (Mouse).